Consider the following 346-residue polypeptide: DNA primase small subunit PriS (346 aa).

Residues D97, D99, and D278 contribute to the active site.

It belongs to the eukaryotic-type primase small subunit family. In terms of assembly, heterodimer of a small subunit (PriS) and a large subunit (PriL). Mg(2+) is required as a cofactor. Requires Mn(2+) as cofactor.

Functionally, catalytic subunit of DNA primase, an RNA polymerase that catalyzes the synthesis of short RNA molecules used as primers for DNA polymerase during DNA replication. The small subunit contains the primase catalytic core and has DNA synthesis activity on its own. Binding to the large subunit stabilizes and modulates the activity, increasing the rate of DNA synthesis while decreasing the length of the DNA fragments, and conferring RNA synthesis capability. The DNA polymerase activity may enable DNA primase to also catalyze primer extension after primer synthesis. May also play a role in DNA repair. This is DNA primase small subunit PriS from Thermococcus onnurineus (strain NA1).